An 880-amino-acid polypeptide reads, in one-letter code: Valine--tRNA ligase (880 aa).

The short motif at 51-61 (PNVTGELHLGH) is the 'HIGH' region element. The 'KMSKS' region signature appears at 529-533 (KMSKT). Lysine 532 lines the ATP pocket. The stretch at 815–854 (MSTMVDLEAEAKRVEAEIAELETQIERLSARLSDTQFLAK) forms a coiled coil.

The protein belongs to the class-I aminoacyl-tRNA synthetase family. ValS type 1 subfamily. As to quaternary structure, monomer.

The protein localises to the cytoplasm. It carries out the reaction tRNA(Val) + L-valine + ATP = L-valyl-tRNA(Val) + AMP + diphosphate. In terms of biological role, catalyzes the attachment of valine to tRNA(Val). As ValRS can inadvertently accommodate and process structurally similar amino acids such as threonine, to avoid such errors, it has a 'posttransfer' editing activity that hydrolyzes mischarged Thr-tRNA(Val) in a tRNA-dependent manner. In Dehalococcoides mccartyi (strain ATCC BAA-2266 / KCTC 15142 / 195) (Dehalococcoides ethenogenes (strain 195)), this protein is Valine--tRNA ligase.